The primary structure comprises 308 residues: MLVYNQEELVRFVEEAKQYARYGKVADYIPALGKANPNELSIAIYTPDDEVVSAGDVTVKVTLQSISKIIALALVLIDRGEDEVFHKVGMEPTDYPFHSIAKLEEKPAKPLNPMINAGALVVTSMIQGGSVSERLERLLAFVRRLAGNERISYSDEVARSEFETAFLNRSLCYFLKQHRIIDEDVEELMELYTKQCAIEMTCIDLARIGLVLALDGRDPHSSEPLMPLDVARICKTFMVTCGMYNSSGEFAIKVGIPAKSGVSGGILAAVPGRCGIGVFGPALDDKGNSLTGVKLLERLSKTYSLSIF.

Substrate-binding residues include serine 65, asparagine 116, glutamate 161, asparagine 168, tyrosine 192, tyrosine 244, and valine 262.

This sequence belongs to the glutaminase family. As to quaternary structure, homotetramer.

The enzyme catalyses L-glutamine + H2O = L-glutamate + NH4(+). In Geobacillus kaustophilus (strain HTA426), this protein is Glutaminase.